The chain runs to 525 residues: Packaging protein UL32 homolog (525 aa).

Residues 1–12 show a composition bias toward polar residues; it reads MAHKVTSANEPN. Residues 1–20 are disordered; that stretch reads MAHKVTSANEPNPLTGKRLS. The Zn(2+) site is built by Cys95, Cys98, His173, Cys179, Cys255, Cys256, Cys357, Cys360, His427, Cys434, Cys473, and His510. 3 zinc finger regions span residues 95 to 179, 255 to 510, and 357 to 434; these read CRVC…ICRC, CCHL…LRIH, and CPLC…DPLC.

This sequence belongs to the herpesviridae UL32 protein family.

The protein localises to the host cytoplasm. It is found in the host nucleus. In terms of biological role, plays a role in efficient localization of neo-synthesized capsids to nuclear replication compartments, thereby controlling cleavage and packaging of virus genomic DNA. The chain is Packaging protein UL32 homolog from Epstein-Barr virus (strain B95-8) (HHV-4).